A 479-amino-acid chain; its full sequence is Cyclin-dependent kinase F-1 (479 aa).

The Protein kinase domain maps to 21 to 418; sequence YEIFERVGSG…TMEMLNDKYL (398 aa). Residues 27–35 and K50 contribute to the ATP site; that span reads VGSGAYADV. Y32 carries the phosphotyrosine modification. The Proton acceptor role is filled by D146. Phosphoserine is present on residues S179, S208, and S247. Residues 187 to 221 are disordered; it reads KLEDKDGETSEPPEVIPDYENSPRQGSDGQEREAM. T290 is subject to Phosphothreonine. Positions 434–479 are disordered; that stretch reads PTMSGPDEDSPRKWNDYREMDSDSDFDGFGPMNVKPTSSGFTIEFP. Over residues 442 to 454 the composition is skewed to basic and acidic residues; sequence DSPRKWNDYREMD. The segment covering 468–479 has biased composition (polar residues); sequence KPTSSGFTIEFP.

This sequence belongs to the protein kinase superfamily. CMGC Ser/Thr protein kinase family. CDC2/CDKX subfamily. In terms of tissue distribution, highly expressed in suspension cell culture. Expressed at low levels in all plant organs.

It catalyses the reaction L-seryl-[protein] + ATP = O-phospho-L-seryl-[protein] + ADP + H(+). It carries out the reaction L-threonyl-[protein] + ATP = O-phospho-L-threonyl-[protein] + ADP + H(+). The enzyme catalyses [DNA-directed RNA polymerase] + ATP = phospho-[DNA-directed RNA polymerase] + ADP + H(+). Functionally, CDK-activating kinase that modulates CDKD-2 and CDKD-3 activities by phosphorylation of the T-loop. Activates CDKD-2 C-terminal domain (CTD) kinase activity. Activates CDKA-1 probably by phosphorylation. Possesses a CDK kinase activity independently of association with cyclin CYCH1-1. Phosphorylates the CTD of the large subunit of RNA polymerase II. In Arabidopsis thaliana (Mouse-ear cress), this protein is Cyclin-dependent kinase F-1 (CDKF-1).